The sequence spans 209 residues: Neurotrophin-4 (209 aa).

The first 21 residues, 1–21, serve as a signal peptide directing secretion; the sequence is MLPRHSCSLLLFLLLLPSVPM. The propeptide occupies 22-79; it reads EPQPPSSTLPPFLAPEWDLLSPRVALSRGTPAGPPLLFLLEAGAYGEPAGAPANRSRR. Asn-75 carries N-linked (GlcNAc...) asparagine glycosylation. 3 cysteine pairs are disulfide-bonded: Cys-96-Cys-169, Cys-140-Cys-198, and Cys-157-Cys-200.

The protein belongs to the NGF-beta family. As to expression, expressed in thymus, muscle, ovary, brain, heart, stomach and kidney. Expressed in both embryo and adult tissues.

Its subcellular location is the secreted. Target-derived survival factor for peripheral sensory sympathetic neurons. May promote ameloblast differentiation and subsequent reduction in proliferation of ameloblasts. This Rattus norvegicus (Rat) protein is Neurotrophin-4 (Ntf4).